The following is a 326-amino-acid chain: Probable oxidoreductase patJ (326 aa).

Residues 287-326 (HGVQPGSVNGSNGHSTGVESKLEQLGSRAQRRVVIDDAGK) form a disordered region. A compositionally biased stretch (polar residues) spans 292–304 (GSVNGSNGHSTGV).

The protein belongs to the oxidoreductase OpS7 family.

Its subcellular location is the vacuole lumen. It is found in the cytoplasmic vesicle lumen. It functions in the pathway mycotoxin biosynthesis; patulin biosynthesis. Probable oxidoreductase; part of the gene cluster that mediates the biosynthesis of patulin, an acetate-derived tetraketide mycotoxin produced by several fungal species that shows antimicrobial properties against several bacteria. PatJ acts with patO in the vacuole to convert gentisyl alcohol to isoepoxydon. The pathway begins with the synthesis of 6-methylsalicylic acid by the polyketide synthase (PKS) patK via condensation of acetate and malonate units. The 6-methylsalicylic acid decarboxylase patG then catalyzes the decarboxylation of 6-methylsalicylic acid to yield m-cresol (also known as 3-methylphenol). These first reactions occur in the cytosol. The intermediate m-cresol is then transported into the endoplasmic reticulum where the cytochrome P450 monooxygenase patH converts it to m-hydroxybenzyl alcohol, which is further converted to gentisyl alcohol by the cytochrome P450 monooxygenase patI. The oxidoreductases patJ and patO further convert gentisyl alcohol to isoepoxydon in the vacuole. PatN catalyzes then the transformation of isoepoxydon into phyllostine. The cluster protein patF is responsible for the conversion from phyllostine to neopatulin whereas the alcohol dehydrogenase patD converts neopatulin to E-ascladiol. The steps between isoepoxydon and E-ascladiol occur in the cytosol, and E-ascladiol is probably secreted to the extracellular space by one of the cluster-specific transporters patC or patM. Finally, the secreted patulin synthase patE catalyzes the conversion of E-ascladiol to patulin. The sequence is that of Probable oxidoreductase patJ from Penicillium expansum (Blue mold rot fungus).